The primary structure comprises 339 residues: Ribosomal RNA small subunit methyltransferase H (339 aa).

Residues 44–46, Asp-61, Phe-88, Asp-105, and Gln-112 contribute to the S-adenosyl-L-methionine site; that span reads GGY. The interval 263–312 is disordered; that stretch reads PQAQSRHLPEKAAAQPVFEKPMKPVSPGEAETAENPRARSAHLRAARRTA. Residues 301–312 are compositionally biased toward basic residues; the sequence is RSAHLRAARRTA.

It belongs to the methyltransferase superfamily. RsmH family.

It localises to the cytoplasm. It carries out the reaction cytidine(1402) in 16S rRNA + S-adenosyl-L-methionine = N(4)-methylcytidine(1402) in 16S rRNA + S-adenosyl-L-homocysteine + H(+). Functionally, specifically methylates the N4 position of cytidine in position 1402 (C1402) of 16S rRNA. The polypeptide is Ribosomal RNA small subunit methyltransferase H (Chelativorans sp. (strain BNC1)).